We begin with the raw amino-acid sequence, 292 residues long: Glycine--tRNA ligase alpha subunit (292 aa).

This sequence belongs to the class-II aminoacyl-tRNA synthetase family. As to quaternary structure, tetramer of two alpha and two beta subunits.

It is found in the cytoplasm. It catalyses the reaction tRNA(Gly) + glycine + ATP = glycyl-tRNA(Gly) + AMP + diphosphate. The protein is Glycine--tRNA ligase alpha subunit of Syntrophus aciditrophicus (strain SB).